Reading from the N-terminus, the 348-residue chain is Protein-glutamate methylesterase/protein-glutamine glutaminase 2 (348 aa).

The Response regulatory domain maps to 5–122 (KVLIIDDSAL…DLGLSQYRDE (118 aa)). A 4-aspartylphosphate modification is found at D56. Residues 157 to 348 (SLKTGFLCAI…AANIIKHALK (192 aa)) form the CheB-type methylesterase domain. Active-site residues include S169, H195, and D291.

Belongs to the CheB family. Phosphorylated by CheA. Phosphorylation of the N-terminal regulatory domain activates the methylesterase activity.

The protein localises to the cytoplasm. The catalysed reaction is [protein]-L-glutamate 5-O-methyl ester + H2O = L-glutamyl-[protein] + methanol + H(+). It catalyses the reaction L-glutaminyl-[protein] + H2O = L-glutamyl-[protein] + NH4(+). In terms of biological role, involved in chemotaxis. Part of a chemotaxis signal transduction system that modulates chemotaxis in response to various stimuli. Catalyzes the demethylation of specific methylglutamate residues introduced into the chemoreceptors (methyl-accepting chemotaxis proteins or MCP) by CheR. Also mediates the irreversible deamidation of specific glutamine residues to glutamic acid. The sequence is that of Protein-glutamate methylesterase/protein-glutamine glutaminase 2 from Saccharophagus degradans (strain 2-40 / ATCC 43961 / DSM 17024).